Here is a 248-residue protein sequence, read N- to C-terminus: Tropomyosin alpha-4 chain (248 aa).

Ala-2 bears the N-acetylalanine mark. Residues 2–248 (AGLNSLEAVK…DQTLDELNCI (247 aa)) are a coiled coil. Ser-6 is subject to Phosphoserine. The tract at residues 16 to 47 (ALQQQADEAEDRAQGLQRELDGERERREKAEG) is disordered. Residues 33 to 47 (RELDGERERREKAEG) are compositionally biased toward basic and acidic residues. An N6-acetyllysine mark is found at Lys-177 and Lys-215. A Phosphothreonine modification is found at Thr-216.

Belongs to the tropomyosin family. As to quaternary structure, homodimer. Heterodimer of an alpha (TPM1, TPM3 or TPM4) and a beta (TPM2) chain.

It localises to the cytoplasm. Its subcellular location is the cytoskeleton. Functionally, binds to actin filaments in muscle and non-muscle cells. Plays a central role, in association with the troponin complex, in the calcium dependent regulation of vertebrate striated muscle contraction. Smooth muscle contraction is regulated by interaction with caldesmon. In non-muscle cells is implicated in stabilizing cytoskeleton actin filaments. Binds calcium. The polypeptide is Tropomyosin alpha-4 chain (TPM4) (Equus caballus (Horse)).